We begin with the raw amino-acid sequence, 446 residues long: NADH-dependent phenylglyoxylate dehydrogenase subunit beta (446 aa).

4 4Fe-4S ferredoxin-type domains span residues 6-35 (STIAFDPAKCDGCGDCMTACAQAKTGTDDI), 49-80 (ADKTFELALCRQCADPKCVTVCPAGALNKDGT), 82-111 (GVIGWDATKCVDCLLCTVGCAYAGIALDEA), and 109-141 (DEATGHVAKCDTCDGNPACVPACPHGALKHITT).

Dimer of heteropentamers composed of an alpha (PadG), a beta (PadI), a gamma (PadE), a delta (PadF) and an epsilon (PadH) subunit. [4Fe-4S] cluster serves as cofactor.

The catalysed reaction is phenylglyoxylate + NAD(+) + CoA = benzoyl-CoA + CO2 + NADH. Its activity is regulated as follows. Activated by magnesium ions and thiamine diphosphate. Its function is as follows. Involved in the anaerobic metabolism of phenylalanine and phenylacetate. Catalyzes the oxidative decarboxylation of phenylglyoxylate to benzoyl-CoA and CO(2). It can also react slowly with 2-oxo-3-methylbutanoate and use different electron acceptors such as benzyl viologen, methyl viologen, FAD or FMN, but NAD seems to be the physiological electron acceptor. Also catalyzes an isotope exchange between CO(2) and the carboxyl group which proves partial or complete reversibility of the oxidative decarboxylation reaction. This chain is NADH-dependent phenylglyoxylate dehydrogenase subunit beta (padI), found in Aromatoleum evansii (Azoarcus evansii).